The primary structure comprises 145 residues: Antiholin-like protein LrgA (145 aa).

4 consecutive transmembrane segments (helical) span residues 10–30, 33–53, 72–92, and 96–116; these read PAHFFHQVIVIALVLFVSKII, FMPIPMPASVIGLVLLFVLLC, NIGLLFVPAGISVVNSLGVIS, and FLIIGLIIVSTILLLICTGYV.

This sequence belongs to the CidA/LrgA family. LrgA subfamily.

It localises to the cell membrane. Inhibits the expression or activity of extracellular murein hydrolases by interacting, possibly with LrgB, with the holin-like proteins CidA and/or CidB. The LrgAB and CidAB proteins may affect the proton motive force of the membrane. May be involved in programmed cell death (PCD), possibly triggering PCD in response to antibiotics and environmental stresses. The protein is Antiholin-like protein LrgA of Staphylococcus aureus (strain JH1).